Consider the following 279-residue polypeptide: Secreted RxLR effector protein 90 (279 aa).

The first 19 residues, 1–19, serve as a signal peptide directing secretion; the sequence is MKSAAAFATFLTLSVFVAT. The RxLR-dEER signature appears at 29–46; sequence RGLRSLADNQSTESSEGR. 2 disordered regions span residues 29-53 and 135-176; these read RGLRSLADNQSTESSEGRKDHYNHH and ATPA…NLAG. An N-linked (GlcNAc...) asparagine glycan is attached at asparagine 37. Over residues 135–146 the composition is skewed to low complexity; the sequence is ATPAPTTSVPSS. The span at 147 to 163 shows a compositional bias: polar residues; sequence LVNTDTSDNQLPTTPVA. Gly residues predominate over residues 166-176; it reads QGGGIGSNLAG. An N-linked (GlcNAc...) asparagine glycan is attached at asparagine 217.

Belongs to the RxLR effector family.

The protein resides in the secreted. The protein localises to the host cell membrane. In terms of biological role, secreted effector that completely suppresses the host cell death induced by cell death-inducing proteins. The protein is Secreted RxLR effector protein 90 of Plasmopara viticola (Downy mildew of grapevine).